Here is a 179-residue protein sequence, read N- to C-terminus: Cytochrome b6-f complex iron-sulfur subunit 1 (179 aa).

A helical membrane pass occupies residues 21–43; sequence LLTFGTVTGVALGALYPVVNYFI. A Rieske domain is found at 61–162; it reads GNDVSVSKFL…AKTENDKIVL (102 aa). Positions 108, 110, 126, and 129 each coordinate [2Fe-2S] cluster. Cys113 and Cys128 are joined by a disulfide.

Belongs to the Rieske iron-sulfur protein family. The 4 large subunits of the cytochrome b6-f complex are cytochrome b6, subunit IV (17 kDa polypeptide, PetD), cytochrome f and the Rieske protein, while the 4 small subunits are PetG, PetL, PetM and PetN. The complex functions as a dimer. The cofactor is [2Fe-2S] cluster.

Its subcellular location is the cellular thylakoid membrane. The enzyme catalyses 2 oxidized [plastocyanin] + a plastoquinol + 2 H(+)(in) = 2 reduced [plastocyanin] + a plastoquinone + 4 H(+)(out). In terms of biological role, component of the cytochrome b6-f complex, which mediates electron transfer between photosystem II (PSII) and photosystem I (PSI), cyclic electron flow around PSI, and state transitions. The polypeptide is Cytochrome b6-f complex iron-sulfur subunit 1 (Nostoc sp. (strain PCC 7120 / SAG 25.82 / UTEX 2576)).